Reading from the N-terminus, the 138-residue chain is Cysteine desulfuration protein SufE (138 aa).

Cysteine 51 acts as the Cysteine persulfide intermediate in catalysis.

Belongs to the SufE family. As to quaternary structure, homodimer. Interacts with SufS.

It localises to the cytoplasm. Its pathway is cofactor biosynthesis; iron-sulfur cluster biosynthesis. Its function is as follows. Participates in cysteine desulfuration mediated by SufS. Cysteine desulfuration mobilizes sulfur from L-cysteine to yield L-alanine and constitutes an essential step in sulfur metabolism for biosynthesis of a variety of sulfur-containing biomolecules. Functions as a sulfur acceptor for SufS, by mediating the direct transfer of the sulfur atom from the S-sulfanylcysteine of SufS, an intermediate product of cysteine desulfuration process. The chain is Cysteine desulfuration protein SufE from Photorhabdus laumondii subsp. laumondii (strain DSM 15139 / CIP 105565 / TT01) (Photorhabdus luminescens subsp. laumondii).